Here is a 113-residue protein sequence, read N- to C-terminus: Hydrogenase maturation factor HypA (113 aa).

Ni(2+) is bound at residue His-2. Residues Cys-73, Cys-76, Cys-89, and Cys-92 each coordinate Zn(2+).

It belongs to the HypA/HybF family.

Involved in the maturation of [NiFe] hydrogenases. Required for nickel insertion into the metal center of the hydrogenase. The polypeptide is Hydrogenase maturation factor HypA (Cereibacter sphaeroides (Rhodobacter sphaeroides)).